The chain runs to 229 residues: Potassium/proton antiporter CemA (229 aa).

A run of 3 helical transmembrane segments spans residues 6-26, 107-127, and 189-209; these read AFIP…ISLC, ILHF…SFWA, and ILSG…KYWI.

Belongs to the CemA family.

The protein localises to the plastid. It is found in the chloroplast inner membrane. It carries out the reaction K(+)(in) + H(+)(out) = K(+)(out) + H(+)(in). In terms of biological role, contributes to K(+)/H(+) antiport activity by supporting proton efflux to control proton extrusion and homeostasis in chloroplasts in a light-dependent manner to modulate photosynthesis. Prevents excessive induction of non-photochemical quenching (NPQ) under continuous-light conditions. Indirectly promotes efficient inorganic carbon uptake into chloroplasts. This chain is Potassium/proton antiporter CemA, found in Crucihimalaya wallichii (Rock-cress).